We begin with the raw amino-acid sequence, 252 residues long: Protein AGAMOUS-LIKE 6 (252 aa).

The MADS-box domain maps to 1-61; the sequence is MGRGRVELKR…GKLYEFGSAG (61 aa). 2 short sequence motifs (nuclear localization signal) span residues 8–15 and 138–145; these read LKRIENKI and QRKTQIMM. The K-box domain occupies 85-175; it reads TQSWYQEVSK…KIKVSLELSS (91 aa).

As to expression, restricted to flowers.

It localises to the nucleus. Functionally, probable transcription factor involved in fruit development. Key regulator of the transition between the state of 'ovary arrest' imposed towards anthesis and the fertilization-triggered fruit set. The protein is Protein AGAMOUS-LIKE 6 of Solanum lycopersicum (Tomato).